A 456-amino-acid polypeptide reads, in one-letter code: tRNA modification GTPase MnmE (456 aa).

3 residues coordinate (6S)-5-formyl-5,6,7,8-tetrahydrofolate: R25, E87, and R126. Residues 221-377 (GLKVAIVGQP…LENAIIEQVN (157 aa)) enclose the TrmE-type G domain. Residue N231 coordinates K(+). Residues 231-236 (NVGKSS), 250-256 (TDLPGTT), and 275-278 (DTAG) each bind GTP. S235 provides a ligand contact to Mg(2+). T250, L252, and T255 together coordinate K(+). T256 provides a ligand contact to Mg(2+). K456 contributes to the (6S)-5-formyl-5,6,7,8-tetrahydrofolate binding site.

This sequence belongs to the TRAFAC class TrmE-Era-EngA-EngB-Septin-like GTPase superfamily. TrmE GTPase family. In terms of assembly, homodimer. Heterotetramer of two MnmE and two MnmG subunits. It depends on K(+) as a cofactor.

The protein resides in the cytoplasm. In terms of biological role, exhibits a very high intrinsic GTPase hydrolysis rate. Involved in the addition of a carboxymethylaminomethyl (cmnm) group at the wobble position (U34) of certain tRNAs, forming tRNA-cmnm(5)s(2)U34. The protein is tRNA modification GTPase MnmE of Synechocystis sp. (strain ATCC 27184 / PCC 6803 / Kazusa).